The primary structure comprises 546 residues: Protein FAM124A (546 aa).

Disordered regions lie at residues 1–37 (MDPKAGGGGEEDDCVDSGAETGGSDYSHLSSTSSELS), 285–361 (KFPK…QRSK), and 488–546 (SSSS…EFYI). Residues 24–36 (SDYSHLSSTSSEL) are compositionally biased toward low complexity. Over residues 285–302 (KFPKPGRVHHSSEKKRHS) the composition is skewed to basic residues. 2 stretches are compositionally biased toward polar residues: residues 304-324 (PLPSTAVPSHTPGSSQQSPLN) and 347-361 (ANSTPNPPWSFQRSK). Over residues 488–511 (SSSSATARAAPPAPSTSTLTDSSP) the composition is skewed to low complexity.

Belongs to the FAM124 family.

The sequence is that of Protein FAM124A (FAM124A) from Pongo abelii (Sumatran orangutan).